Here is a 491-residue protein sequence, read N- to C-terminus: Probable Xaa-Pro aminopeptidase An01g13040 (491 aa).

Mn(2+) contacts are provided by Asp276, Asp287, Glu420, and Glu459.

Belongs to the peptidase M24B family. It depends on Mn(2+) as a cofactor.

The enzyme catalyses Release of any N-terminal amino acid, including proline, that is linked to proline, even from a dipeptide or tripeptide.. Its function is as follows. Catalyzes the removal of a penultimate prolyl residue from the N-termini of peptides. This chain is Probable Xaa-Pro aminopeptidase An01g13040, found in Aspergillus niger (strain ATCC MYA-4892 / CBS 513.88 / FGSC A1513).